We begin with the raw amino-acid sequence, 274 residues long: SIMKMDGSQQEENLDVISTGSLGVDLALGVGGLPRGRVVEIFGPESSGKTTLCLEAIAQCQKTGGICAFIDAEHAFDPVYARKLGVKVEELYLSQPDTGEQALEICDTLVRSGGVDMVVVDSVAALVPKAEIEGEMGDSHVGLQARLMSQALRKLTGHIKRTNTLVVFINQIRMKIGVMFGSPETTTGGNALKFYASVRLDIRRTGQIKKGDDVIGNETKVKVIKNKVAPPFRQAEFDILYGEGVSWEGELIDLGVKYDIVEKSGAWYSYNGSK.

43 to 50 (GPESSGKT) is an ATP binding site.

It belongs to the RecA family.

The protein resides in the cytoplasm. Functionally, can catalyze the hydrolysis of ATP in the presence of single-stranded DNA, the ATP-dependent uptake of single-stranded DNA by duplex DNA, and the ATP-dependent hybridization of homologous single-stranded DNAs. It interacts with LexA causing its activation and leading to its autocatalytic cleavage. This chain is Protein RecA, found in Neisseria pharyngis.